A 507-amino-acid polypeptide reads, in one-letter code: ATP synthase subunit alpha, chloroplastic (507 aa).

Residue 170-177 (GDRQTGKT) participates in ATP binding.

This sequence belongs to the ATPase alpha/beta chains family. F-type ATPases have 2 components, CF(1) - the catalytic core - and CF(0) - the membrane proton channel. CF(1) has five subunits: alpha(3), beta(3), gamma(1), delta(1), epsilon(1). CF(0) has four main subunits: a, b, b' and c.

The protein localises to the plastid. The protein resides in the chloroplast thylakoid membrane. The enzyme catalyses ATP + H2O + 4 H(+)(in) = ADP + phosphate + 5 H(+)(out). In terms of biological role, produces ATP from ADP in the presence of a proton gradient across the membrane. The alpha chain is a regulatory subunit. The chain is ATP synthase subunit alpha, chloroplastic from Liriodendron tulipifera (Tuliptree).